The sequence spans 495 residues: Membrane-bound glycerophospholipid O-acyltransferase 1 (495 aa).

The next 6 helical transmembrane spans lie at 34-54 (VNFV…RIYL), 70-90 (IFGI…LFVL), 126-146 (IYIF…MIVT), 180-200 (PSFL…AGPC), 238-258 (TGAV…FLTL), and 297-317 (YFAW…FSGV). Catalysis depends on residues N350 and H381. A run of 3 helical transmembrane segments spans residues 371–391 (VLTF…YFTF), 426–446 (TWAV…MLAV), and 450–470 (ISLY…IILF). S488 carries the post-translational modification Phosphoserine.

It belongs to the membrane-bound acyltransferase family. In terms of tissue distribution, expressed in neutrophils.

The protein resides in the endoplasmic reticulum membrane. It catalyses the reaction a 1-acyl-sn-glycero-3-phospho-L-serine + an acyl-CoA = a 1,2-diacyl-sn-glycero-3-phospho-L-serine + CoA. The enzyme catalyses a 1-acyl-sn-glycero-3-phosphocholine + an acyl-CoA = a 1,2-diacyl-sn-glycero-3-phosphocholine + CoA. It carries out the reaction a 1-acyl-sn-glycero-3-phosphoethanolamine + an acyl-CoA = a 1,2-diacyl-sn-glycero-3-phosphoethanolamine + CoA. The catalysed reaction is 1-(9Z-octadecenoyl)-sn-glycero-3-phospho-L-serine + (9Z)-octadecenoyl-CoA = 1,2-di-(9Z)-octadecenoyl-sn-glycero-3-phospho-L-serine + CoA. It catalyses the reaction 1-(9Z-octadecenoyl)-sn-glycero-3-phospho-L-serine + octadecanoyl-CoA = 1-(9Z-octadecenoyl)-2-octadecanoyl-sn-glycero-3-phospho-L-serine + CoA. The enzyme catalyses 1-(9Z-octadecenoyl)-sn-glycero-3-phospho-L-serine + (9Z)-hexadecenoyl-CoA = 1-(9Z-octadecenoyl)-2-(9Z-hexadecenoyl)-sn-glycero-3-phospho-L-serine + CoA. It carries out the reaction 1-(9Z-octadecenoyl)-sn-glycero-3-phospho-L-serine + (9Z,12Z)-octadecadienoyl-CoA = 1-(9Z-octadecenoyl)-2-(9Z,12Z-octadienoyl)-sn-glycero-3-phospho-L-serine + CoA. The catalysed reaction is 1-hexadecanoyl-sn-glycero-3-phosphocholine + (9Z)-octadecenoyl-CoA = 1-hexadecanoyl-2-(9Z-octadecenoyl)-sn-glycero-3-phosphocholine + CoA. It catalyses the reaction a 1-O-(1Z-alkenyl)-sn-glycero-3-phosphoethanolamine + (9Z)-octadecenoyl-CoA = 1-O-(1Z)-alkenyl-2-(9Z)-octadecenoyl-sn-glycero-3-phosphoethanolamine + CoA. The enzyme catalyses 1-octadecanoyl-sn-glycero-3-phosphoethanolamine + (9Z)-octadecenoyl-CoA = 1-octadecanoyl-2-(9Z-octadecenoyl)-sn-glycero-3-phosphoethanolamine + CoA. It carries out the reaction 1-(9Z-octadecenoyl)-sn-glycero-3-phosphoethanolamine + (9Z)-octadecenoyl-CoA = 1,2-di-(9Z-octadecenoyl)-sn-glycero-3-phosphoethanolamine + CoA. The catalysed reaction is 1-hexadecanoyl-sn-glycero-3-phosphoethanolamine + (9Z)-octadecenoyl-CoA = 1-hexadecanoyl-2-(9Z-octadecenoyl)-sn-glycero-3-phosphoethanolamine + CoA. It catalyses the reaction 1-(10Z-heptadecenoyl)-sn-glycero-3-phosphoethanolamine + hexadecanoyl-CoA = 1-(10Z-heptadecenoyl)-2-hexadecanoyl-sn-glycero-3-phosphoethanolamine + CoA. The enzyme catalyses 1-(10Z-heptadecenoyl)-sn-glycero-3-phosphoethanolamine + (9Z)-octadecenoyl-CoA = 1-(10Z-heptadecenoyl)-2-(9Z-octadecenoyl)-sn-glycero-3-phosphoethanolamine + CoA. The protein operates within lipid metabolism; phospholipid metabolism. Partially inhibited by thimerosal. Functionally, acyltransferase which catalyzes the transfer of an acyl group from an acyl-CoA towards a lysophospholipid producing a phospholipid and participates in the reacylation step of the phospholipid remodeling pathway also known as the Lands cycle. Acts on lysophosphatidylserine (1-acyl-2-hydroxy-sn-glycero-3-phospho-L-serine or LPS) and lysophosphatidylethanolamine (1-acyl-sn-glycero-3-phosphoethanolamine or LPE), and to a lesser extend lysophosphatidylcholine. Prefers oleoyl-CoA as the acyl donor and 1-oleoyl-LPE as acceptor. May play a role in neurite outgrowth during neuronal differentiation. This chain is Membrane-bound glycerophospholipid O-acyltransferase 1, found in Homo sapiens (Human).